A 24-amino-acid polypeptide reads, in one-letter code: KFKVVTTFTVIQDIAQNVAGDAAT.

It localises to the periplasm. May be involved in iron uptake. The polypeptide is Iron-regulated 31 kDa protein (Haemophilus influenzae).